Consider the following 526-residue polypeptide: Calcium-dependent protein kinase 28 (526 aa).

Residues 1-37 (MQPDPQPHGRGREKAAGAGPRLPPPVTAPSVGRPASV) form a disordered region. In terms of domain architecture, Protein kinase spans 49–307 (YRIGKKLGQG…AHEVLCHPWI (259 aa)). Residues 55-63 (LGQGQFGTT) and lysine 78 contribute to the ATP site. The active-site Proton acceptor is aspartate 173. The tract at residues 313-343 (APDKPIDSAVLSRLKHFSAMNKLKKMALRVI) is autoinhibitory domain. 4 EF-hand domains span residues 350 to 385 (EEIGGLKELFKMIDTDNSGTITYDELKNGLKRVGSD), 386 to 421 (LMEPEIQALMDAADIDNSGTIDYGEFLAATLHMNKL), 422 to 457 (EREENLVSAFTFFDKDGSGFITIDELSQACEQFGLS), and 460 to 491 (HLEDMIKDVDQNNDGQIDYSEFAAMMRKGNAG). Residues aspartate 363, aspartate 365, serine 367, threonine 369, glutamate 374, aspartate 399, aspartate 401, serine 403, threonine 405, glutamate 410, aspartate 435, aspartate 437, serine 439, glutamate 446, aspartate 469, asparagine 471, aspartate 473, glutamine 475, and glutamate 480 each coordinate Ca(2+).

Belongs to the protein kinase superfamily. Ser/Thr protein kinase family. CDPK subfamily.

The catalysed reaction is L-seryl-[protein] + ATP = O-phospho-L-seryl-[protein] + ADP + H(+). It catalyses the reaction L-threonyl-[protein] + ATP = O-phospho-L-threonyl-[protein] + ADP + H(+). Activated by calcium. Autophosphorylation may play an important role in the regulation of the kinase activity. May play a role in signal transduction pathways that involve calcium as a second messenger. The chain is Calcium-dependent protein kinase 28 from Oryza sativa subsp. japonica (Rice).